The primary structure comprises 72 residues: Cytochrome c oxidase subunit 8C, mitochondrial (72 aa).

Residues 1–29 (MSRLLQFCSSLLRHRVVLFSKPGHSGRLS) constitute a mitochondrion transit peptide. The Mitochondrial matrix segment spans residues 30–40 (HSESPQNQVLT). A helical membrane pass occupies residues 41–64 (PTESVVGIVVFFATFFIPAAYVMS). Residues 65–72 (NLKFFKGE) are Mitochondrial intermembrane-facing.

The protein belongs to the cytochrome c oxidase VIII family. As to quaternary structure, component of the cytochrome c oxidase (complex IV, CIV), a multisubunit enzyme composed of 14 subunits. The complex is composed of a catalytic core of 3 subunits MT-CO1, MT-CO2 and MT-CO3, encoded in the mitochondrial DNA, and 11 supernumerary subunits COX4I, COX5A, COX5B, COX6A, COX6B, COX6C, COX7A, COX7B, COX7C, COX8 and NDUFA4, which are encoded in the nuclear genome. The complex exists as a monomer or a dimer and forms supercomplexes (SCs) in the inner mitochondrial membrane with NADH-ubiquinone oxidoreductase (complex I, CI) and ubiquinol-cytochrome c oxidoreductase (cytochrome b-c1 complex, complex III, CIII), resulting in different assemblies (supercomplex SCI(1)III(2)IV(1) and megacomplex MCI(2)III(2)IV(2)).

The protein localises to the mitochondrion inner membrane. It participates in energy metabolism; oxidative phosphorylation. Component of the cytochrome c oxidase, the last enzyme in the mitochondrial electron transport chain which drives oxidative phosphorylation. The respiratory chain contains 3 multisubunit complexes succinate dehydrogenase (complex II, CII), ubiquinol-cytochrome c oxidoreductase (cytochrome b-c1 complex, complex III, CIII) and cytochrome c oxidase (complex IV, CIV), that cooperate to transfer electrons derived from NADH and succinate to molecular oxygen, creating an electrochemical gradient over the inner membrane that drives transmembrane transport and the ATP synthase. Cytochrome c oxidase is the component of the respiratory chain that catalyzes the reduction of oxygen to water. Electrons originating from reduced cytochrome c in the intermembrane space (IMS) are transferred via the dinuclear copper A center (CU(A)) of subunit 2 and heme A of subunit 1 to the active site in subunit 1, a binuclear center (BNC) formed by heme A3 and copper B (CU(B)). The BNC reduces molecular oxygen to 2 water molecules using 4 electrons from cytochrome c in the IMS and 4 protons from the mitochondrial matrix. This is Cytochrome c oxidase subunit 8C, mitochondrial (Cox8c) from Rattus norvegicus (Rat).